Consider the following 219-residue polypeptide: 2-hydroxy-3-keto-5-methylthiopentenyl-1-phosphate phosphatase (219 aa).

This sequence belongs to the HAD-like hydrolase superfamily. MtnX family.

The enzyme catalyses 2-hydroxy-5-methylsulfanyl-3-oxopent-1-enyl phosphate + H2O = 1,2-dihydroxy-5-(methylsulfanyl)pent-1-en-3-one + phosphate. Its pathway is amino-acid biosynthesis; L-methionine biosynthesis via salvage pathway; L-methionine from S-methyl-5-thio-alpha-D-ribose 1-phosphate: step 4/6. In terms of biological role, dephosphorylates 2-hydroxy-3-keto-5-methylthiopentenyl-1-phosphate (HK-MTPenyl-1-P) yielding 1,2-dihydroxy-3-keto-5-methylthiopentene (DHK-MTPene). The polypeptide is 2-hydroxy-3-keto-5-methylthiopentenyl-1-phosphate phosphatase (Bacillus cereus (strain 03BB102)).